A 530-amino-acid polypeptide reads, in one-letter code: Glutamate--cysteine ligase (530 aa).

Belongs to the glutamate--cysteine ligase type 1 family. Type 1 subfamily.

It carries out the reaction L-cysteine + L-glutamate + ATP = gamma-L-glutamyl-L-cysteine + ADP + phosphate + H(+). Its pathway is sulfur metabolism; glutathione biosynthesis; glutathione from L-cysteine and L-glutamate: step 1/2. This chain is Glutamate--cysteine ligase, found in Saccharophagus degradans (strain 2-40 / ATCC 43961 / DSM 17024).